The primary structure comprises 164 residues: Peptidyl-prolyl cis-trans isomerase CYP18-2 (164 aa).

A PPIase cyclophilin-type domain is found at 12–162 (VTLETSMGPF…HEVKILRTKV (151 aa)).

The protein belongs to the cyclophilin-type PPIase family. As to expression, ubiquitous.

The protein localises to the cytoplasm. It carries out the reaction [protein]-peptidylproline (omega=180) = [protein]-peptidylproline (omega=0). Functionally, PPIases accelerate the folding of proteins. It catalyzes the cis-trans isomerization of proline imidic peptide bonds in oligopeptides. This chain is Peptidyl-prolyl cis-trans isomerase CYP18-2 (CYP18-2), found in Arabidopsis thaliana (Mouse-ear cress).